Consider the following 466-residue polypeptide: Glutamate decarboxylase (466 aa).

Position 277 is an N6-(pyridoxal phosphate)lysine (Lys-277).

It belongs to the group II decarboxylase family. The cofactor is pyridoxal 5'-phosphate.

The catalysed reaction is L-glutamate + H(+) = 4-aminobutanoate + CO2. Its function is as follows. Converts internalized glutamate to GABA and increases the internal pH. Involved in glutamate-dependent acid resistance. The chain is Glutamate decarboxylase (gadB) from Lactococcus lactis subsp. lactis (strain IL1403) (Streptococcus lactis).